The sequence spans 156 residues: Isotocin-neurophysin IT 2 (156 aa).

The N-terminal stretch at M1–A19 is a signal peptide. A disulfide bridge connects residues C20 and C25. At G28 the chain carries Glycine amide. 7 cysteine pairs are disulfide-bonded: C41/C85, C44/C58, C52/C75, C59/C65, C92/C105, C99/C117, and C106/C111.

Belongs to the vasopressin/oxytocin family. In terms of processing, seven disulfide bonds are present in neurophysin.

It is found in the secreted. Its function is as follows. Isotocin causes contraction of smooth muscles. This is Isotocin-neurophysin IT 2 from Oncorhynchus keta (Chum salmon).